A 641-amino-acid chain; its full sequence is Leucine-rich repeat protein soc-2 homolog (641 aa).

The segment covering 1–19 has biased composition (low complexity); the sequence is MNLCSSGATASTTSLSSTG. The tract at residues 1–146 is disordered; the sequence is MNLCSSGATA…TTKKSKPIQA (146 aa). Gly residues predominate over residues 24–56; sequence SGGGGVAGGGGISNGGGGGGGVTGSGGGGGGNT. The segment covering 96–106 has biased composition (low complexity); sequence GAQQPSGSNGQ. LRR repeat units lie at residues 161–182, 184–205, 207–228, 230–251, 253–274, 276–297, 299–320, 322–343, 345–367, 368–389, 392–413, 416–437, 440–461, 463–484, 486–507, 509–530, 532–553, 555–576, 578–600, and 602–623; these read GIKR…VKDC, QITE…IGCL, NLRN…LQNC, QLKV…IYRL, SLTT…LRQL, NLTM…IGAL, NLTT…IGNC, NLSA…IGNL, SLVR…KNCK, CMDE…MLAS, GLTT…GPAQ, NVYS…IFSR, GLTK…IGTW, NMVE…IMNL, NLEI…IGNL, RLRI…IGLL, ELQR…IGHL, NLTH…IGSL, SLEN…LALC, and NLKY…IQAG.

The protein belongs to the SHOC2 family.

In terms of biological role, acts as a Ras effector and participates in MAPK pathway activation. Probably acts as a regulatory subunit of protein phosphatase that specifically dephosphorylates Raf kinase and stimulate Raf activity at specialized signaling complexes upon Ras activation. This chain is Leucine-rich repeat protein soc-2 homolog (Sur-8), found in Drosophila ananassae (Fruit fly).